We begin with the raw amino-acid sequence, 404 residues long: Probable tRNA sulfurtransferase (404 aa).

A THUMP domain is found at 60–165 (EEVIPKLSKV…KDAAYLSYET (106 aa)). Residues 183 to 184 (ML), 208 to 209 (HF), R265, G287, and Q296 contribute to the ATP site.

This sequence belongs to the ThiI family.

The protein localises to the cytoplasm. The catalysed reaction is [ThiI sulfur-carrier protein]-S-sulfanyl-L-cysteine + a uridine in tRNA + 2 reduced [2Fe-2S]-[ferredoxin] + ATP + H(+) = [ThiI sulfur-carrier protein]-L-cysteine + a 4-thiouridine in tRNA + 2 oxidized [2Fe-2S]-[ferredoxin] + AMP + diphosphate. It catalyses the reaction [ThiS sulfur-carrier protein]-C-terminal Gly-Gly-AMP + S-sulfanyl-L-cysteinyl-[cysteine desulfurase] + AH2 = [ThiS sulfur-carrier protein]-C-terminal-Gly-aminoethanethioate + L-cysteinyl-[cysteine desulfurase] + A + AMP + 2 H(+). The protein operates within cofactor biosynthesis; thiamine diphosphate biosynthesis. Functionally, catalyzes the ATP-dependent transfer of a sulfur to tRNA to produce 4-thiouridine in position 8 of tRNAs, which functions as a near-UV photosensor. Also catalyzes the transfer of sulfur to the sulfur carrier protein ThiS, forming ThiS-thiocarboxylate. This is a step in the synthesis of thiazole, in the thiamine biosynthesis pathway. The sulfur is donated as persulfide by IscS. In Enterococcus faecalis (strain ATCC 700802 / V583), this protein is Probable tRNA sulfurtransferase.